The sequence spans 622 residues: Probable potassium transport system protein Kup 2 (622 aa).

A run of 12 helical transmembrane segments spans residues 9–29 (LSGVTLAAIGVVYGDIGTSPL), 46–66 (PASILGFLSLIFWLLILVVSV), 99–119 (TPLLIILGLIGGSFFYGEVVI), 137–157 (PSLDPYIVPLSVLVLTLLFAI), 169–189 (FAPIMLTWFITLAVLGLNSIF), 213–233 (ASFFALGAVVLAITGVEALYA), 247–267 (WFMVVLPSLVLNYFGQGALLL), 285–305 (ALLPLLLLATLATVIASQAVI), 337–357 (IYIPVINWMLYISVVIVIMSF), 363–383 (LAAAYGIAVTGTMVLTSILSC), 396–416 (LVAALFVALLAIDVPLFAANL), and 419–439 (IFSGGWLPLTLGAVMFTVMTS).

It belongs to the HAK/KUP transporter (TC 2.A.72) family.

The protein resides in the cell inner membrane. The enzyme catalyses K(+)(in) + H(+)(in) = K(+)(out) + H(+)(out). In terms of biological role, transport of potassium into the cell. Likely operates as a K(+):H(+) symporter. The polypeptide is Probable potassium transport system protein Kup 2 (Aeromonas hydrophila subsp. hydrophila (strain ATCC 7966 / DSM 30187 / BCRC 13018 / CCUG 14551 / JCM 1027 / KCTC 2358 / NCIMB 9240 / NCTC 8049)).